The primary structure comprises 526 residues: GMP synthase [glutamine-hydrolyzing] (526 aa).

Residues 9-208 form the Glutamine amidotransferase type-1 domain; that stretch reads RILILDFGSQ…LVNICGCKQL (200 aa). The active-site Nucleophile is cysteine 86. Catalysis depends on residues histidine 182 and glutamate 184. Residues 209–401 enclose the GMPS ATP-PPase domain; sequence WTPGRIIEDA…LGLPYDMVYR (193 aa). 236–242 is a binding site for ATP; sequence SGGVDSS.

In terms of assembly, homodimer.

The enzyme catalyses XMP + L-glutamine + ATP + H2O = GMP + L-glutamate + AMP + diphosphate + 2 H(+). It functions in the pathway purine metabolism; GMP biosynthesis; GMP from XMP (L-Gln route): step 1/1. Its function is as follows. Catalyzes the synthesis of GMP from XMP. The protein is GMP synthase [glutamine-hydrolyzing] of Hahella chejuensis (strain KCTC 2396).